The chain runs to 229 residues: MKKKKALASLPYLVSIIFLPWWVSLSFNKCLETWVINWWNTRQSEIPLNDIQDKNVLEKFMELEELFLLDEMIKEYSETHMQRLHIGMHKETIQLVQRQNESHFHIILHFSTNLICFAILSGYFFLGNKELFIFNSWIQEFLYNLSDTIKAFSILLVTDLWIGFHSTHGWELMIGSIYNDFGLAQNDQIISGLVSTFPVILDTIVKYWIFHFLNRVSPSLVVIYHSMNE.

Transmembrane regions (helical) follow at residues L7 to F27, I106 to L126, I154 to I174, and I189 to I209.

Belongs to the CemA family.

It localises to the plastid. It is found in the chloroplast inner membrane. The catalysed reaction is K(+)(in) + H(+)(out) = K(+)(out) + H(+)(in). Contributes to K(+)/H(+) antiport activity by supporting proton efflux to control proton extrusion and homeostasis in chloroplasts in a light-dependent manner to modulate photosynthesis. Prevents excessive induction of non-photochemical quenching (NPQ) under continuous-light conditions. Indirectly promotes efficient inorganic carbon uptake into chloroplasts. The polypeptide is Potassium/proton antiporter CemA (Phalaenopsis aphrodite subsp. formosana (Moth orchid)).